Here is a 220-residue protein sequence, read N- to C-terminus: Ras-related protein Rab-1 (220 aa).

A GTP-binding site is contributed by glycine 14 to serine 21. The Effector region signature appears at tyrosine 36 to phenylalanine 44. Residues aspartate 62–glutamine 66 and asparagine 121–aspartate 124 contribute to the GTP site. Cysteine 219 carries the S-geranylgeranyl cysteine lipid modification.

The protein belongs to the small GTPase superfamily. Rab family.

Its subcellular location is the cell membrane. Its function is as follows. Protein transport. Probably involved in vesicular traffic from ER to Golgi. This chain is Ras-related protein Rab-1 (rab1), found in Theileria parva (East coast fever infection agent).